The primary structure comprises 237 residues: UPF0758 protein Aave_3773 (237 aa).

In terms of domain architecture, MPN spans 115–237 (LFHSPRAVRD…SLSMAEEGLI (123 aa)). Histidine 186, histidine 188, and aspartate 199 together coordinate Zn(2+). The short motif at 186–199 (HNHPSGQVQPSRAD) is the JAMM motif element.

Belongs to the UPF0758 family.

This is UPF0758 protein Aave_3773 from Paracidovorax citrulli (strain AAC00-1) (Acidovorax citrulli).